The chain runs to 227 residues: Chalcone--flavanone isomerase (227 aa).

Positions 50, 115, and 192 each coordinate substrate.

The protein belongs to the chalcone isomerase family. In terms of tissue distribution, fibers.

The catalysed reaction is a chalcone = a flavanone.. Its pathway is secondary metabolite biosynthesis; flavonoid biosynthesis. Catalyzes the intramolecular cyclization of bicyclic chalcones into tricyclic (S)-flavanones. Responsible for the isomerization of 4,2',4',6'-tetrahydroxychalcone (also termed chalcone) into naringenin. In Gossypium hirsutum (Upland cotton), this protein is Chalcone--flavanone isomerase (CHI).